Here is a 578-residue protein sequence, read N- to C-terminus: ATP-dependent RNA helicase dbp3 (578 aa).

A compositionally biased stretch (basic and acidic residues) spans 59 to 69 (KRSADEEASVK). Residues 59–117 (KRSADEEASVKRKEKKSKHEHKKHKKDKPSADKDRISKKDKKKSKKGKSKTKEESIEIN) form a disordered region. A compositionally biased stretch (basic residues) spans 70–85 (RKEKKSKHEHKKHKKD). Residues 86 to 95 (KPSADKDRIS) are compositionally biased toward basic and acidic residues. The segment covering 96 to 107 (KKDKKKSKKGKS) has biased composition (basic residues). The Q motif signature appears at 167–193 (LQFDELDVSAKLREGLKNYKEPTPIQA). One can recognise a Helicase ATP-binding domain in the interval 196–373 (WPYLLAGRDV…ATFLKDPVKI (178 aa)). 209–216 (AETGSGKT) lines the ATP pocket. Positions 316–319 (DEAD) match the DEAD box motif. The Helicase C-terminal domain occupies 402 to 550 (MLDNLLRKHL…DIPEGLFKFG (149 aa)).

It belongs to the DEAD box helicase family. DDX5/DBP2 subfamily.

The protein resides in the nucleus. The protein localises to the nucleolus. It carries out the reaction ATP + H2O = ADP + phosphate + H(+). ATP-dependent RNA helicase required for 60S ribosomal subunit synthesis. Involved in efficient pre-rRNA processing, predominantly at site A3, which is necessary for the normal formation of 25S and 5.8S rRNAs. The polypeptide is ATP-dependent RNA helicase dbp3 (dbp3) (Schizosaccharomyces pombe (strain 972 / ATCC 24843) (Fission yeast)).